The sequence spans 427 residues: Peptidase B (427 aa).

Residues lysine 195 and aspartate 200 each coordinate Mn(2+). Lysine 207 is a catalytic residue. Residues aspartate 218, aspartate 277, and glutamate 279 each contribute to the Mn(2+) site. Residue arginine 281 is part of the active site.

The protein belongs to the peptidase M17 family. As to quaternary structure, homohexamer. Mn(2+) serves as cofactor.

It is found in the cytoplasm. It carries out the reaction Release of an N-terminal amino acid, Xaa, from a peptide or arylamide. Xaa is preferably Glu or Asp but may be other amino acids, including Leu, Met, His, Cys and Gln.. In terms of biological role, probably plays an important role in intracellular peptide degradation. This is Peptidase B from Salmonella arizonae (strain ATCC BAA-731 / CDC346-86 / RSK2980).